The primary structure comprises 332 residues: Fructose-1,6-bisphosphatase class 1 (332 aa).

4 residues coordinate Mg(2+): Glu-89, Asp-110, Leu-112, and Asp-113. Substrate contacts are provided by residues 113–116 (DGSS), Asn-206, Tyr-239, 257–259 (YLY), and Lys-269. Glu-275 lines the Mg(2+) pocket.

Belongs to the FBPase class 1 family. As to quaternary structure, homotetramer. Requires Mg(2+) as cofactor.

The protein resides in the cytoplasm. The catalysed reaction is beta-D-fructose 1,6-bisphosphate + H2O = beta-D-fructose 6-phosphate + phosphate. It functions in the pathway carbohydrate biosynthesis; gluconeogenesis. This is Fructose-1,6-bisphosphatase class 1 from Shigella sonnei (strain Ss046).